The chain runs to 441 residues: Cobyrinate a,c-diamide synthase (441 aa).

Positions 243 to 434 (TVAVADDAAF…AHVHPESTAF (192 aa)) constitute a GATase cobBQ-type domain. The Nucleophile role is filled by Cys323.

This sequence belongs to the CobB/CbiA family. Mg(2+) serves as cofactor.

It catalyses the reaction cob(II)yrinate + 2 L-glutamine + 2 ATP + 2 H2O = cob(II)yrinate a,c diamide + 2 L-glutamate + 2 ADP + 2 phosphate + 2 H(+). It participates in cofactor biosynthesis; adenosylcobalamin biosynthesis; cob(II)yrinate a,c-diamide from sirohydrochlorin (anaerobic route): step 10/10. Catalyzes the ATP-dependent amidation of the two carboxylate groups at positions a and c of cobyrinate, using either L-glutamine or ammonia as the nitrogen source. The sequence is that of Cobyrinate a,c-diamide synthase from Halobacterium salinarum (strain ATCC 700922 / JCM 11081 / NRC-1) (Halobacterium halobium).